Here is a 596-residue protein sequence, read N- to C-terminus: Elongation factor 4 (596 aa).

One can recognise a tr-type G domain in the interval 2 to 184 (KHIRNFSIIA…VIVAQIPPPE (183 aa)). Residues 14–19 (DHGKST) and 131–134 (NKID) each bind GTP.

Belongs to the TRAFAC class translation factor GTPase superfamily. Classic translation factor GTPase family. LepA subfamily.

It localises to the cell inner membrane. It catalyses the reaction GTP + H2O = GDP + phosphate + H(+). Functionally, required for accurate and efficient protein synthesis under certain stress conditions. May act as a fidelity factor of the translation reaction, by catalyzing a one-codon backward translocation of tRNAs on improperly translocated ribosomes. Back-translocation proceeds from a post-translocation (POST) complex to a pre-translocation (PRE) complex, thus giving elongation factor G a second chance to translocate the tRNAs correctly. Binds to ribosomes in a GTP-dependent manner. The polypeptide is Elongation factor 4 (Shewanella halifaxensis (strain HAW-EB4)).